Reading from the N-terminus, the 429-residue chain is 3-phosphoshikimate 1-carboxyvinyltransferase (429 aa).

Positions 23, 24, and 28 each coordinate 3-phosphoshikimate. Lys-23 provides a ligand contact to phosphoenolpyruvate. Positions 95 and 123 each coordinate phosphoenolpyruvate. 3-phosphoshikimate contacts are provided by Ser-168, Gln-170, Asp-316, and Lys-343. Gln-170 contacts phosphoenolpyruvate. The Proton acceptor role is filled by Asp-316. Arg-347 and Arg-389 together coordinate phosphoenolpyruvate.

This sequence belongs to the EPSP synthase family. In terms of assembly, monomer.

Its subcellular location is the cytoplasm. The enzyme catalyses 3-phosphoshikimate + phosphoenolpyruvate = 5-O-(1-carboxyvinyl)-3-phosphoshikimate + phosphate. It functions in the pathway metabolic intermediate biosynthesis; chorismate biosynthesis; chorismate from D-erythrose 4-phosphate and phosphoenolpyruvate: step 6/7. Catalyzes the transfer of the enolpyruvyl moiety of phosphoenolpyruvate (PEP) to the 5-hydroxyl of shikimate-3-phosphate (S3P) to produce enolpyruvyl shikimate-3-phosphate and inorganic phosphate. The protein is 3-phosphoshikimate 1-carboxyvinyltransferase of Bacillus cereus (strain ATCC 10987 / NRS 248).